The sequence spans 259 residues: Flap endonuclease Xni (259 aa).

Mg(2+) is bound at residue Asp109. Residues 165–255 (VTPAQLTDYW…FNLQDIRFNS (91 aa)) form the 5'-3' exonuclease domain. Positions 176, 185, 187, and 190 each coordinate K(+). The segment at 189-194 (GIGPKA) is interaction with DNA.

This sequence belongs to the Xni family. Requires Mg(2+) as cofactor. K(+) serves as cofactor.

Functionally, has flap endonuclease activity. During DNA replication, flap endonucleases cleave the 5'-overhanging flap structure that is generated by displacement synthesis when DNA polymerase encounters the 5'-end of a downstream Okazaki fragment. The protein is Flap endonuclease Xni of Vibrio cholerae serotype O1 (strain ATCC 39315 / El Tor Inaba N16961).